The following is a 501-amino-acid chain: Lysine--tRNA ligase (501 aa).

Mg(2+) contacts are provided by Glu-402 and Glu-409.

It belongs to the class-II aminoacyl-tRNA synthetase family. Homodimer. Mg(2+) is required as a cofactor.

The protein localises to the cytoplasm. It catalyses the reaction tRNA(Lys) + L-lysine + ATP = L-lysyl-tRNA(Lys) + AMP + diphosphate. This Helicobacter pylori (strain G27) protein is Lysine--tRNA ligase.